A 288-amino-acid polypeptide reads, in one-letter code: Bifunctional protein FolD (288 aa).

Residues 166–168 (GAS) and Ile-232 contribute to the NADP(+) site.

Belongs to the tetrahydrofolate dehydrogenase/cyclohydrolase family. In terms of assembly, homodimer.

The catalysed reaction is (6R)-5,10-methylene-5,6,7,8-tetrahydrofolate + NADP(+) = (6R)-5,10-methenyltetrahydrofolate + NADPH. It catalyses the reaction (6R)-5,10-methenyltetrahydrofolate + H2O = (6R)-10-formyltetrahydrofolate + H(+). The protein operates within one-carbon metabolism; tetrahydrofolate interconversion. Functionally, catalyzes the oxidation of 5,10-methylenetetrahydrofolate to 5,10-methenyltetrahydrofolate and then the hydrolysis of 5,10-methenyltetrahydrofolate to 10-formyltetrahydrofolate. In Escherichia coli (strain SMS-3-5 / SECEC), this protein is Bifunctional protein FolD.